The following is a 232-amino-acid chain: Replicative helicase loading/DNA remodeling protein DnaD (232 aa).

The segment at 1-98 (MKKQQFIDMQ…QNGIKFEKYS (98 aa)) is N-terminal domain. The segment at 1–116 (MKKQQFIDMQ…YEYIQLAQNQ (116 aa)) is DDBH1. The interval 99–205 (LQPLWGKLYE…VEQAKIHSQK (107 aa)) is C-terminal domain. Positions 131-200 (TIFEEEFARP…NGLKTVEQAK (70 aa)) are DDBH2. Residues 206 to 232 (FRRVQAKQNEPQKEYKRQVPFYNWLEQ) form a C-terminal tail region.

The protein belongs to the DnaB/DnaD family. In terms of assembly, the DNA replisome assembles sequentially on oriC in this order; DnaA, DnaD, DnaB, DnaI-DnaC helicase. Homodimer. Homotetramer. Oligomerization in vitro is concentration dependent. Part of the replication restart primosome which assembles in this order; PriA, DnaD then DnaB. The preferred DNA substrate mimics an arrested DNA replication fork with unreplicated lagging strand. Interacts with DnaA, DnaB and PriA. Interaction with DnaB requires DnaD to dimerize.

The protein localises to the cytoplasm. Recruitment to oriC requires DnaA but not DnaB, DnaC or DnaI and is blocked by SirA. In terms of biological role, required to load replicative helicase DnaC onto replication forks. Binds to a DnaD recognition element (DRE) which has pairs of 5'-TnnT-3' motifs; there is a strong DRE at oriC opposite the DnaA-trios recognized by DnaA. During DNA replication from the origin of replication (oriC) in the DNA replisome, DnaD is required after DnaA, before DnaB and subsequent helicase DnaC loading. A component of the replication restart primosome, which reloads the replicative helicase on sites other than oriC. DnaB, DnaD and DnaI may also be required for a PriA-independent pathway of replication fork restart. DnaB and DnaD work together to allow DnaB access to single-stranded (ss)DNA. Has DNA remodeling activity that converts supercoiled plasmid into an open circular form; DnaD forms scaffolds inside the plasmid DNA. Plasmid relaxation incorporates both wrapping around the DnaD protein scaffold and simultaneous untwisting, no nicking of the DNA is seen. Also converts linear DNA into an open circular form. Disrupts a replicative helicase-DnaI complex. Inhibits the ability of DnaA-ATP to form a helix on DNA; does not disassemble preformed helices in vitro. Binds ssDNA, and replication fork-like substrates, supercoiled plasmid, but not stably to short double-stranded (ds)DNA. DnaD stimulates DnaB DNA-binding activities. DnaB and DnaD are required to load helicase on the repN plasmid origin of replication (oriN). Causes a severe growth defect upon overexpression even in an oriC-independent strain. In Bacillus subtilis (strain 168), this protein is Replicative helicase loading/DNA remodeling protein DnaD.